The sequence spans 420 residues: Phosphoribosylamine--glycine ligase (420 aa).

In terms of domain architecture, ATP-grasp spans 108–314 (KQFMEKYAIP…FAALIDALLH (207 aa)). Residue 134–195 (LNERGVPIVI…EDFLAGEEFS (62 aa)) participates in ATP binding. Mg(2+) is bound by residues Glu284 and Asn286.

The protein belongs to the GARS family. It depends on Mg(2+) as a cofactor. The cofactor is Mn(2+).

The enzyme catalyses 5-phospho-beta-D-ribosylamine + glycine + ATP = N(1)-(5-phospho-beta-D-ribosyl)glycinamide + ADP + phosphate + H(+). The protein operates within purine metabolism; IMP biosynthesis via de novo pathway; N(1)-(5-phospho-D-ribosyl)glycinamide from 5-phospho-alpha-D-ribose 1-diphosphate: step 2/2. This chain is Phosphoribosylamine--glycine ligase, found in Listeria monocytogenes serovar 1/2a (strain ATCC BAA-679 / EGD-e).